Consider the following 166-residue polypeptide: Peptide methionine sulfoxide reductase MsrA (166 aa).

Cys-11 is an active-site residue.

This sequence belongs to the MsrA Met sulfoxide reductase family.

It carries out the reaction L-methionyl-[protein] + [thioredoxin]-disulfide + H2O = L-methionyl-(S)-S-oxide-[protein] + [thioredoxin]-dithiol. The catalysed reaction is [thioredoxin]-disulfide + L-methionine + H2O = L-methionine (S)-S-oxide + [thioredoxin]-dithiol. Has an important function as a repair enzyme for proteins that have been inactivated by oxidation. Catalyzes the reversible oxidation-reduction of methionine sulfoxide in proteins to methionine. In Lachnoclostridium phytofermentans (strain ATCC 700394 / DSM 18823 / ISDg) (Clostridium phytofermentans), this protein is Peptide methionine sulfoxide reductase MsrA.